We begin with the raw amino-acid sequence, 419 residues long: 3-oxo-isoapionate-4-phosphate decarboxylase (419 aa).

The Mg(2+) site is built by Lys-179, Asp-181, and Glu-182. Lys-179 is modified (N6-carboxylysine).

The protein belongs to the RuBisCO large chain family. Mg(2+) is required as a cofactor.

The catalysed reaction is 3-oxoisoapionate 4-phosphate + H(+) = L-erythrulose 1-phosphate + CO2. It functions in the pathway carbohydrate metabolism. In terms of biological role, involved in catabolism of D-apiose. Catalyzes the decarboxylation of 3-oxo-isoapionate 4-phosphate to L-erythrulose 1-phosphate. The sequence is that of 3-oxo-isoapionate-4-phosphate decarboxylase from Rhizobium rhizogenes (strain K84 / ATCC BAA-868) (Agrobacterium radiobacter).